Reading from the N-terminus, the 429-residue chain is Adenylosuccinate synthetase (429 aa).

GTP-binding positions include 12 to 18 and 40 to 42; these read GDEGKGK and GHT. The active-site Proton acceptor is the D13. Mg(2+) contacts are provided by D13 and G40. IMP is bound by residues 13 to 16, 38 to 41, T128, R142, Q223, T238, and R302; these read DEGK and NAGH. Residue H41 is the Proton donor of the active site. Position 298–304 (298–304) interacts with substrate; the sequence is VNTGRPR. GTP-binding positions include R304, 330–332, and 412–414; these read KLD and GVG.

The protein belongs to the adenylosuccinate synthetase family. As to quaternary structure, homodimer. Mg(2+) serves as cofactor.

The protein localises to the cytoplasm. The enzyme catalyses IMP + L-aspartate + GTP = N(6)-(1,2-dicarboxyethyl)-AMP + GDP + phosphate + 2 H(+). The protein operates within purine metabolism; AMP biosynthesis via de novo pathway; AMP from IMP: step 1/2. Plays an important role in the de novo pathway of purine nucleotide biosynthesis. Catalyzes the first committed step in the biosynthesis of AMP from IMP. In Arthrobacter sp. (strain FB24), this protein is Adenylosuccinate synthetase.